The primary structure comprises 1380 residues: Receptor-type adenylate cyclase A (1380 aa).

Topologically, residues 1-34 are cytoplasmic; that stretch reads MAMQIRPSLGGCLRHGGAGDHAARRLSRLRAAKV. The helical transmembrane segment at 35 to 55 threads the bilayer; that stretch reads FVPTAVVCVLLCCAPWVMAEI. Residues 56-891 are Extracellular-facing; that stretch reads TNDAEREPVY…SHALTPAQRN (836 aa). 4 N-linked (GlcNAc...) asparagine glycosylation sites follow: asparagine 422, asparagine 478, asparagine 497, and asparagine 567. A helical transmembrane segment spans residues 892 to 912; it reads GLIAGCVVGAVVLIATCTLLL. At 913-1380 the chain is on the cytoplasmic side; that stretch reads YCCMDNRNND…NPHYARHAFE (468 aa). In terms of domain architecture, Guanylate cyclase spans 933 to 1087; sequence TLLFTDIESS…DTSNMAARTE (155 aa). Aspartate 938 and aspartate 981 together coordinate Mg(2+). Residues 1270–1298 are disordered; sequence LAREGDSAAGGVRPRLPGSPVTSLPAGGS.

Belongs to the adenylyl cyclase class-3 family. Mg(2+) serves as cofactor.

The protein resides in the membrane. The catalysed reaction is ATP = 3',5'-cyclic AMP + diphosphate. Could act as a receptor for an unknown ligand. The protein is Receptor-type adenylate cyclase A (RAC-A) of Leishmania donovani.